Reading from the N-terminus, the 343-residue chain is Ribosomal RNA small subunit methyltransferase C (343 aa).

The protein belongs to the methyltransferase superfamily. RsmC family. In terms of assembly, monomer.

The protein resides in the cytoplasm. The enzyme catalyses guanosine(1207) in 16S rRNA + S-adenosyl-L-methionine = N(2)-methylguanosine(1207) in 16S rRNA + S-adenosyl-L-homocysteine + H(+). Functionally, specifically methylates the guanine in position 1207 of 16S rRNA in the 30S particle. The protein is Ribosomal RNA small subunit methyltransferase C of Escherichia coli (strain 55989 / EAEC).